The following is a 1065-amino-acid chain: MHQDAMQGSIYEGSRRNTISKPSNNNPPLDMSSLNNDFGQQLDSLATGVGSGSLNGTTNPSSNFNDSNRSNISSSLRSEMEMSNNLLKNTQNDTWTSTVGLSVPENQEAMNFNEGPTGISSIASKNNSSITSKLQNNSNLSVTSSANRGRTSSVSSSYDPSFPWGPRMSSVSSGKQHLSSLSLHTHFNPSSSSTVSSDSLESSQQKAPSSSSTATPASAASEIISNKDPVVEPTHSASNAANSGSNTIRARQTTRTRSNTLPWSPRVFGPTLGYNTPPFGYPPTTSSALPNASGSSSSFFGLPTAVSASAGTSFSDISPAAPKASLENNIASNASSLLNPVGLDHFSAASGWSRDFNHLPASSLATARSSLTGNAKSGIDSSVTGMPSDNYARVVESSTAEFFDPSLASSFGLTNYRTKPLTTGFNHPRPQGHGLNTSLFNTSSGGSLKSPTFEVSNRLGDVDTVPDLPPLGSLSSRPKPSSSSRRRSQSLSAMLKTSNPYMPSPSLLSGSLANSSEHSSSPRLRGSPIHNQPVSSSKSTASLNTNNNGLRASTPEMANISTRSSSESNNTNSWPTVGDATIENLTQHEPTHALWVGNLPSGVSATTVATTFSAYGTVSSIRMLSHKHSAFLNFDSVETAKHVLEELNGKRIFFGSDPVCISFAKVASSSSESSHSAVDGLNKAFSNVSFVPSLREVYDDLINVVQSFGFKDLSKIYQILNAACELTDFAAQIPSISKAFSSRRLNAPKLRQVRKRIDNGLCTQEEVEDIAINWLDEVSDLSSDHLGNTVVQKLFDYCSDPVKEMMLERIAPHLAQIGIHKNGTWAAQKIVDVASTEAQMRLIAKHLQPYIPLLFADQFGNYVVQTCLKFGAPMNDFVFEAILNQFWVIAQSRYGSRAVRACLESPDVTEEQRVLVAAAITVYSVHLAMNGNGTLLLTYLVENMNYPHIPILLTRRFVQDIVRVCTHRLAYNSLLKIISISQGDTACGDLVVDAILDTQNDLNPNSLEKILFEQTYGPSFICKLLTHENISASHRQQLQSAVRNVLGTMEDRGSSELKKLAEVCA.

Disordered stretches follow at residues 1-78 (MHQD…SLRS), 130-265 (ITSK…PWSP), and 422-573 (TTGF…NTNS). Residues 16–44 (RNTISKPSNNNPPLDMSSLNNDFGQQLDS) show a composition bias toward polar residues. Over residues 59–77 (NPSSNFNDSNRSNISSSLR) the composition is skewed to low complexity. Composition is skewed to polar residues over residues 134 to 151 (LQNN…RGRT) and 169 to 189 (SSVS…HFNP). 2 stretches are compositionally biased toward low complexity: residues 190–224 (SSSS…SEII) and 236–246 (SASNAANSGSN). Polar residues-rich tracts occupy residues 247–262 (TIRA…NTLP) and 434–455 (GLNT…TFEV). T260 carries the phosphothreonine modification. Positions 470–483 (PLGSLSSRPKPSSS) are enriched in low complexity. Polar residues-rich tracts occupy residues 495–522 (LKTS…SSSP) and 529–551 (IHNQ…NGLR). A phosphoserine mark is found at S506, S511, and S515. T554 bears the Phosphothreonine mark. A compositionally biased stretch (low complexity) spans 559–573 (NISTRSSSESNNTNS). Residues 592 to 666 (HALWVGNLPS…DPVCISFAKV (75 aa)) enclose the RRM domain. A PUM-HD domain is found at 712–1065 (DLSKIYQILN…ELKKLAEVCA (354 aa)). 6 Pumilio repeats span residues 771 to 808 (AINW…MMLE), 809 to 844 (RIAP…RLIA), 846 to 884 (HLQP…AILN), 886 to 917 (FWVI…VLVA), 919 to 954 (AITV…ILLT), and 956 to 993 (RFVQ…LVVD).

It is found in the cytoplasm. The sequence is that of Pumilio domain-containing protein P35G2.14 from Schizosaccharomyces pombe (strain 972 / ATCC 24843) (Fission yeast).